The sequence spans 67 residues: DNA gyrase inhibitor YacG (67 aa).

Residues Cys9, Cys12, Cys28, and Cys32 each coordinate Zn(2+). The segment at 46 to 67 (RIPSSGDLNDSDDWSEQPLDRQ) is disordered.

This sequence belongs to the DNA gyrase inhibitor YacG family. Interacts with GyrB. It depends on Zn(2+) as a cofactor.

In terms of biological role, inhibits all the catalytic activities of DNA gyrase by preventing its interaction with DNA. Acts by binding directly to the C-terminal domain of GyrB, which probably disrupts DNA binding by the gyrase. This Erwinia tasmaniensis (strain DSM 17950 / CFBP 7177 / CIP 109463 / NCPPB 4357 / Et1/99) protein is DNA gyrase inhibitor YacG.